A 587-amino-acid polypeptide reads, in one-letter code: MGFYSMPRYFQNMPQVGKPLKKADAANEEQLKKIEEEIHQLIKEAQEAGKADADVNKRGELTALQRIEKLVEPGSWRPLNTLFNPQGNKNGSVAIVKGLGRVNGKWCVVVASDNKKLAGAWVPGQAECLLRASDTAKTLHVPLVYVLNCSGVKFDEQEKVYPNRRGGGTPFFRNAELNQLGIPVIVGIYGTNPAGGGYHSISPTVIIAHEKANMAVGGAGIMGGMNPKGHVDLEYANEIADMVDRTGKTEPPGAVDIHYTETGFMREVYASEEGVLEGIKKYVGMLPKYDPEFFRVDDPKAPAFPADDLYSMVPLNDKRAYDIYNVIARLFDNSELHEYKKGYGPEMVTGLAKVNGLLVGVVANVQGLLMNYPEYKAAGSVGIGGKLYRQGLVKMNEFVTLCARDRLPIVWIQDTTGIDVGNDAEKAELLGLGQSLIYSIQTSHIPQFEITLRKGTAAAHYVLGGPQGNDTNAFSIGTAATEIAVMNGETAATAMYSRRLAKDRKAGKDLQPTIDKMNNLIQAFYTKSRPKVCAELGLVDEIVDMNKIRGYVEAFTEAAYQNPESICPFHQMILPRAIREFETFVKK.

Positions 31-298 (LKKIEEEIHQ…YDPEFFRVDD (268 aa)) constitute a CoA carboxyltransferase N-terminal domain. The interval 31-558 (LKKIEEEIHQ…RGYVEAFTEA (528 aa)) is carboxyltransferase. One can recognise a CoA carboxyltransferase C-terminal domain in the interval 295 to 558 (RVDDPKAPAF…RGYVEAFTEA (264 aa)).

As to quaternary structure, heterooctamer consisting of two alpha, two beta, two gamma and two delta subunits.

The catalysed reaction is (2E)-glutaconyl-CoA + Na(+)(in) + H(+) = (2E)-butenoyl-CoA + Na(+)(out) + CO2. Its pathway is amino-acid degradation; L-glutamate degradation via hydroxyglutarate pathway; crotonoyl-CoA from L-glutamate: step 5/5. Its function is as follows. Decarboxylase subunit of the primary sodium pump glutaconyl-CoA decarboxylase (GCD). This chain is Glutaconyl-CoA decarboxylase subunit alpha (gcdA), found in Acidaminococcus fermentans (strain ATCC 25085 / DSM 20731 / CCUG 9996 / CIP 106432 / VR4).